The following is a 1468-amino-acid chain: MASGAGGIGGGGGGGKIRTRRCHQGPVKPYQQGRPQHQGILSRVTESVKNIVPGWLQRYFNKSENACSCSVNADEVPRWPENREDEREIYVDENTNTDDGRTTPEPTGSNTEEPSTTSTASNYPDVLTRPSLHRSHLNFSVLESPALHCQPSTSSAFPIGSSGFSLVKEIKDSTSQHDDDNISTTSGFSSRASEKDIAVSKNTSLPPLWSPEAERSHSLSQHTAISSKKPAFNLSAFGTLSTSLGNSSILKTSQLGDSPFYPGKTTYGGAAAAVRQNKVRSTPYQAPVRRQMKAKQLNAQSYGVTSSTARRILQSLEKMSSPLADAKRIPSAVSSPLNSPLDRSGIDSTVFQAKKEKVDSQYPPVQRLMTPKPVSIATNRTVYFKPSLTPSGDLRKTNQRIDKKNSTVDEKNISRQNREQESGFSYPNFSIPAANGLSSGVGGGGGKMRRERTTHFVASKPSEEEEVEVPLLPQISLPISSSSLPTFNFSSPAISAASSSSVSPSQPLSNKVQMTSLGSTGNPVFTFSSPIVKSTQADVLPPASIGFTFSVPLAKTELSGPNSSSETVLSSSVTAQDNTVVNSSSSKKRSAPCEDPFTPAKILREGSVLDILKTPGFMSPKVDSPALQPTTTSSIVYTRPAISTFSSSGVEFGESLKAGSSWQCDTCLLQNKVTDNKCIACQAAKLPLKETAKQTGIGTPSKSDKPASTSGTGFGDKFKPAIGTWDCDTCLVQNKPEAVKCVACETPKPGTGVKRALPLTVASESPVTASSSTTVTTGTLGFGDKFKRPVGSWECPVCCVSNKAEDSRCVSCTSEKPGLVSASSSNSVPVSLPSGGCLGLDKFKKPEGSWDCEVCLVQNKADSTKCIACESAKPGTKSEFKGFGTSSSLNPAPSAFKFGIPSSSSGLSQTFTSTGNFKFGDQGGFKLGTSSDSGSTNTMNTNFKFPKPTGDFKFGVLPDSKPEEIKNDSKNDNFQFGPSSGLSNPASSAPFQFGVSTLGQQEKKEELPQSSSAGFSFGAGVANPSSAAIDTTVTSENKSGFNFGTIDTKSVSVTPFTYKTTEAKKEDASATKGGFTFGKVDSAALSSPSMFVLGRTEEKQQEPVTSTSLVFGKKADNEEPKCQPVFSFGNSEQTKDESSSKPTFSFSVAKPSVKESDQLAKATFAFGNQTNTTTDQGAAKPAFSFLNSSSSSSSTPATSSSASIFGSSTSSSSPPVAAFVFGQASNPVSSSAFGNSAESSTSQPLLFPQDGKPATTSSTASAAPPFVFGTGASSNSTVSSGFTFGATTTSSSSGSFFVFGTGHSAPSASPAFGANQTPTFGQSQGASQPNPPSFGSISSSTALFSAGSQPVPPPTFGTVSSSSQPPVFGQQPSQSAFGSGTANASSVFQFGSSTTNFNFTNNNPSGVFTFGASPSTPAAAAQPSGSGGFSFSQSPASFTVGSNGKNMFSSSGTSVSGRKIKTAVRRKK.

A compositionally biased stretch (gly residues) spans 1–16 (MASGAGGIGGGGGGGK). Disordered stretches follow at residues 1–39 (MASGAGGIGGGGGGGKIRTRRCHQGPVKPYQQGRPQHQG), 78–128 (RWPE…DVLT), and 172–222 (DSTS…LSQH). At alanine 2 the chain carries N-acetylalanine. Residues 78–90 (RWPENREDEREIY) are compositionally biased toward basic and acidic residues. Phosphothreonine occurs at positions 97 and 103. Polar residues-rich tracts occupy residues 104–122 (PEPTGSNTEEPSTTSTASN) and 182–191 (ISTTSGFSSR). 5 positions are modified to phosphoserine: serine 183, serine 186, serine 193, serine 204, and serine 210. Repeat unit 1 spans residues 237 to 238 (FG). Positions 237 to 1411 (FGTLSTSLGN…NNPSGVFTFG (1175 aa)) are 29 X 2 AA repeats of F-G. A phosphoserine mark is found at serine 241, serine 258, serine 321, serine 331, serine 334, serine 335, serine 339, and serine 344. Lysine 354 participates in a covalent cross-link: Glycyl lysine isopeptide (Lys-Gly) (interchain with G-Cter in SUMO2). Threonine 370 carries the phosphothreonine modification. An N6-acetyllysine modification is found at lysine 385. The disordered stretch occupies residues 387–429 (SLTPSGDLRKTNQRIDKKNSTVDEKNISRQNREQESGFSYPNF). Threonine 389 is subject to Phosphothreonine. Basic and acidic residues predominate over residues 393-421 (DLRKTNQRIDKKNSTVDEKNISRQNREQE). Phosphoserine is present on residues serine 500, serine 516, and serine 529. O-linked (GlcNAc) serine glycans are attached at residues serine 534 and serine 544. Residues serine 607, serine 619, and serine 633 each carry the phosphoserine modification. Copy 2 of the repeat occupies 652-653 (FG). The RanBP2-type 1 zinc finger occupies 657 to 687 (KAGSSWQCDTCLLQNKVTDNKCIACQAAKLP). Residues cysteine 664, cysteine 667, cysteine 678, and cysteine 681 each coordinate Zn(2+). Residues 693 to 711 (KQTGIGTPSKSDKPASTSG) are compositionally biased toward polar residues. The segment at 693–714 (KQTGIGTPSKSDKPASTSGTGF) is disordered. Repeat 3 spans residues 714–715 (FG). At lysine 717 the chain carries N6-acetyllysine. The RanBP2-type 2 zinc finger occupies 721–750 (AIGTWDCDTCLVQNKPEAVKCVACETPKPG). Zn(2+)-binding residues include cysteine 727, cysteine 730, cysteine 741, and cysteine 744. Copy 4 of the repeat occupies 782–783 (FG). RanBP2-type zinc fingers lie at residues 789–818 (PVGSWECPVCCVSNKAEDSRCVSCTSEKPG) and 846–875 (PEGSWDCEVCLVQNKADSTKCIACESAKPG). Positions 795, 798, 809, 812, 852, 855, 866, and 869 each coordinate Zn(2+). The residue at position 886 (serine 886) is a Phosphoserine. Residues 898–899 (FG) form repeat 5. O-linked (GlcNAc) serine glycosylation is present at serine 902. Copy 6 of the repeat occupies 919 to 920 (FG). Lysine 947 carries the N6-acetyllysine modification. Copy 7 of the repeat occupies 954-955 (FG). A compositionally biased stretch (basic and acidic residues) spans 960-971 (SKPEEIKNDSKN). The interval 960-985 (SKPEEIKNDSKNDNFQFGPSSGLSNP) is disordered. Residues 972–985 (DNFQFGPSSGLSNP) show a composition bias toward polar residues. Repeat copies occupy residues 976–977 (FG), 993–994 (FG), 1017–1018 (FG), and 1077–1078 (FG). The O-linked (GlcNAc) serine glycan is linked to serine 1106. Repeat copies occupy residues 1111–1112 (FG), 1128–1129 (FG), 1166–1167 (FG), 1205–1206 (FG), 1221–1222 (FG), 1233–1234 (FG), 1268–1269 (FG), 1282–1283 (FT), 1284–1285 (FG), 1299–1300 (FG), 1312–1313 (FG), 1320–1321 (FG), 1334–1335 (FG), 1356–1357 (FG), 1368–1369 (FG), 1377–1378 (FG), 1390–1391 (FG), and 1410–1411 (FG). The disordered stretch occupies residues 1121–1145 (KCQPVFSFGNSEQTKDESSSKPTFS). The disordered stretch occupies residues 1190–1209 (SSSSSTPATSSSASIFGSST). Low complexity predominate over residues 1231–1242 (SAFGNSAESSTS). The disordered stretch occupies residues 1231–1260 (SAFGNSAESSTSQPLLFPQDGKPATTSSTA). The interval 1308–1380 (ASPAFGANQT…QPSQSAFGSG (73 aa)) is disordered. Composition is skewed to polar residues over residues 1314-1348 (ANQTPTFGQSQGASQPNPPSFGSISSSTALFSAGS) and 1357-1380 (GTVSSSSQPPVFGQQPSQSAFGSG). Low complexity predominate over residues 1414 to 1438 (PSTPAAAAQPSGSGGFSFSQSPASF). The interval 1414-1468 (PSTPAAAAQPSGSGGFSFSQSPASFTVGSNGKNMFSSSGTSVSGRKIKTAVRRKK) is disordered. The span at 1439–1456 (TVGSNGKNMFSSSGTSVS) shows a compositional bias: polar residues. Residues serine 1450, serine 1454, and serine 1456 each carry the phosphoserine modification. Positions 1458 to 1468 (RKIKTAVRRKK) are enriched in basic residues.

The protein belongs to the NUP153 family. Part of the nuclear pore complex (NPC). Interacts with TPR (via coiled coil region); the interaction is direct and provides a link between the core structure and the TPR-containing nuclear basket of the nuclear pore complex (NPC). Interacts with HIKESHI. Interacts with SENP2. Interacts with XPO5. Interacts with RAN; the interaction occurs in a GTP- and GDP-independent manner. Interacts with MCM3AP; this interaction is required for MCM3AP localization at the nuclear pore complex. Interacts with MAPK1. Zn(2+) serves as cofactor. Phosphorylated in interphase, hyperphosphorylated during mitosis. May play a role in the reversible disassembly of the nuclear pore complex during mitosis. In terms of processing, O-glycosylated during cytokinesis at sites identical or close to phosphorylation sites, this interferes with the phosphorylation status.

It is found in the nucleus. It localises to the nucleus membrane. Its subcellular location is the nuclear pore complex. Its function is as follows. Component of the nuclear pore complex (NPC), a complex required for the trafficking across the nuclear envelope. Functions as a scaffolding element in the nuclear phase of the NPC essential for normal nucleocytoplasmic transport of proteins and mRNAs. Involved in the quality control and retention of unspliced mRNAs in the nucleus; in association with TPR, regulates the nuclear export of unspliced mRNA species bearing constitutive transport element (CTE) in a NXF1- and KHDRBS1-independent manner. Mediates TPR anchoring to the nuclear membrane at NPC. The repeat-containing domain may be involved in anchoring other components of the NPC to the pore membrane. Possible DNA-binding subunit of the nuclear pore complex (NPC). The chain is Nuclear pore complex protein Nup153 (Nup153) from Rattus norvegicus (Rat).